Consider the following 613-residue polypeptide: Zinc metalloproteinase-disintegrin-like MTP4 (613 aa).

The N-terminal stretch at 1 to 20 (MIEVLLVTICFTVFPYQGSS) is a signal peptide. Positions 21–191 (IILESGNVND…DEPIEKISQL (171 aa)) are excised as a propeptide. Residues 205 to 401 (KYIELYVVVD…VRPQCILNKP (197 aa)) enclose the Peptidase M12B domain. Glu-208 provides a ligand contact to Ca(2+). Asn-282 carries an N-linked (GlcNAc...) asparagine glycan. Asp-292 contacts Ca(2+). Disulfide bonds link Cys-316-Cys-396, Cys-356-Cys-380, and Cys-358-Cys-363. Positions 341, 345, and 351 each coordinate Zn(2+). The Ca(2+) site is built by Cys-396, Asn-399, Asn-414, Phe-416, Glu-418, Glu-421, and Asp-424. The 87-residue stretch at 409–495 (PPVCGNYFVE…KCPTDSFQRN (87 aa)) folds into the Disintegrin domain. Intrachain disulfides connect Cys-412–Cys-441, Cys-423–Cys-436, Cys-425–Cys-431, Cys-435–Cys-458, Cys-449–Cys-455, Cys-454–Cys-480, Cys-467–Cys-487, Cys-474–Cys-506, Cys-499–Cys-511, Cys-518–Cys-568, Cys-533–Cys-575, Cys-543–Cys-577, Cys-546–Cys-556, Cys-563–Cys-601, and Cys-595–Cys-606. The N-linked (GlcNAc...) asparagine glycan is linked to Asn-437. Residues 473-475 (DCD) carry the D/ECD-tripeptide motif. The Ca(2+) site is built by Asp-475, Leu-476, Glu-478, and Asp-490. Residues 561-574 (KMCGKLLCEKGNAT) form a hypervariable region that may play important roles toward cell migration region. Asn-572 carries N-linked (GlcNAc...) asparagine glycosylation.

Belongs to the venom metalloproteinase (M12B) family. P-III subfamily. In terms of assembly, monomer. Zn(2+) serves as cofactor. In terms of tissue distribution, expressed by the venom gland.

Its subcellular location is the secreted. Functionally, snake venom zinc metalloproteinase that may impair hemostasis in the prey. The polypeptide is Zinc metalloproteinase-disintegrin-like MTP4 (Drysdalia coronoides (White-lipped snake)).